Consider the following 1146-residue polypeptide: Elicitor of plant defense protein 1 (1146 aa).

Disordered regions lie at residues 25–75 (DPLP…RLSN) and 156–226 (ARPP…PRQG). The span at 164–177 (RAERIKAEDSDQSG) shows a compositional bias: basic and acidic residues. The 255-residue stretch at 246-500 (PLNTDPNMHP…NLCTEAFSPL (255 aa)) folds into the uDENN domain. In terms of domain architecture, cDENN spans 522–656 (VNEIPGSRTI…HRRKLHALLQ (135 aa)). Residues 658–1016 (AAPAKLRYGV…ERETKPGTTA (359 aa)) enclose the dDENN domain. Positions 730–806 (LHSKVDPNKP…RRSSSFGVDK (77 aa)) are disordered. Residues 732-743 (SKVDPNKPDRPG) show a composition bias toward basic and acidic residues. A compositionally biased stretch (low complexity) spans 744–760 (TSKSTRTSPPSSVSPVS). Positions 769–783 (TPVSRSDSGFALTST) are enriched in polar residues. Positions 784–797 (LREKRSRNFDEKTR) are enriched in basic and acidic residues. The segment at 883-931 (GHCFNWEEGALSSSCSVCDDRAEGDGIYKCSGCSAFAHGRCLGCVSLAC) adopts a Phorbol-ester/DAG-type zinc-finger fold. Residues 1121-1146 (PRPEQRGTRGLVRKQVPSMLGTSPTN) form a disordered region.

The protein belongs to the EPD1 elicitor family. Interacts with host cotton EIR5A (AC A0A5J5T2N2) and EIR5D (AC A0A5J5NT52) and host N.benthamiana EIR (AC P0DXJ0).

The protein resides in the secreted. It is found in the host cell. Its function is as follows. Acts as an elicitor that triggers defense responses in both Nicotiana benthamiana and cotton plants. Triggers the accumulation of reactive oxygen species (ROS) and the activation of cell death in cotton plants. Induces significantly enhanced resistance of Nicotiana benthamiana to both the broad-host-range filamentous pathogen Botrytis cinerea and the semibiotrophic pathogen Phytophthora capsici. Stimulates the expression of EIR5A (AC A0A5J5T2N2) and EIR5D (AC A0A5J5NT52) in cotton plants and recognition of EPD1 potentiates EIRs to enhance cotton PAMP-triggered immunity (PTI). In Verticillium dahliae (strain VdLs.17 / ATCC MYA-4575 / FGSC 10137) (Verticillium wilt), this protein is Elicitor of plant defense protein 1.